The following is a 623-amino-acid chain: uncharacterized protein (623 aa).

Residues 28–171 (TSAEVSQRVL…TIATLFAQVQ (144 aa)) enclose the GAF domain. In terms of domain architecture, GGDEF spans 212–345 (GPVAALFLDL…GGDSVAIFTA (134 aa)). The EAL domain maps to 354–609 (RNDIELHLRR…AMRHMLSARR (256 aa)).

This is an uncharacterized protein from Mycobacterium tuberculosis (strain CDC 1551 / Oshkosh).